The primary structure comprises 249 residues: 3-deoxy-D-manno-octulosonic acid kinase (249 aa).

The active site involves D175.

The protein belongs to the protein kinase superfamily. KdkA/RfaP family.

The protein resides in the cell inner membrane. It carries out the reaction an alpha-Kdo-(2-&gt;6)-lipid IVA + ATP = a 4-O-phospho-alpha-Kdo-(2-&gt;6)-lipid IVA + ADP + H(+). It participates in bacterial outer membrane biogenesis; LPS core biosynthesis. In terms of biological role, catalyzes the ATP-dependent phosphorylation of the 3-deoxy-D-manno-octulosonic acid (Kdo) residue in Kdo-lipid IV(A) at the 4-OH position. The sequence is that of 3-deoxy-D-manno-octulosonic acid kinase from Xylella fastidiosa (strain M23).